Reading from the N-terminus, the 206-residue chain is MELNVKTLEGKDAGKVSLSDEIFGLEPREDILARVIRWQLAKKQQGTHKAKGRAEVSRTGAKMYKQKGTGRARHHSARAPQFRGGGKAHGPVVRSHEHDLPKKVRALGLRHALSAKIKADDVIVIDNLVAAEAKTKALASAFETLGLTNALFIGGAELDGNFKLAAQNIPNIDVLPIQGINVYDIVRRGKLVLSKAAVEALEERFK.

Residues 63–97 (MYKQKGTGRARHHSARAPQFRGGGKAHGPVVRSHE) are disordered. The span at 64 to 77 (YKQKGTGRARHHSA) shows a compositional bias: basic residues.

The protein belongs to the universal ribosomal protein uL4 family. As to quaternary structure, part of the 50S ribosomal subunit.

One of the primary rRNA binding proteins, this protein initially binds near the 5'-end of the 23S rRNA. It is important during the early stages of 50S assembly. It makes multiple contacts with different domains of the 23S rRNA in the assembled 50S subunit and ribosome. In terms of biological role, forms part of the polypeptide exit tunnel. This Rhizobium etli (strain ATCC 51251 / DSM 11541 / JCM 21823 / NBRC 15573 / CFN 42) protein is Large ribosomal subunit protein uL4.